The chain runs to 545 residues: Glucose-6-phosphate isomerase (545 aa).

The Proton donor role is filled by glutamate 351. Catalysis depends on residues histidine 382 and lysine 510.

It belongs to the GPI family.

The protein resides in the cytoplasm. The enzyme catalyses alpha-D-glucose 6-phosphate = beta-D-fructose 6-phosphate. It participates in carbohydrate biosynthesis; gluconeogenesis. It functions in the pathway carbohydrate degradation; glycolysis; D-glyceraldehyde 3-phosphate and glycerone phosphate from D-glucose: step 2/4. Its function is as follows. Catalyzes the reversible isomerization of glucose-6-phosphate to fructose-6-phosphate. This Helicobacter pylori (strain Shi470) protein is Glucose-6-phosphate isomerase.